We begin with the raw amino-acid sequence, 482 residues long: Pentatricopeptide repeat-containing protein At1g74900, mitochondrial (482 aa).

PPR repeat units follow at residues Asp-90–Pro-124, Ser-125–Gln-159, Asp-160–Arg-190, Asp-194–Pro-228, Asn-229–Ile-263, Asp-264–Pro-298, Ser-299–Pro-333, Asn-334–Pro-368, Asn-369–Pro-403, Asn-404–Pro-441, and Arg-442–Leu-476.

The protein belongs to the PPR family. P subfamily.

It localises to the mitochondrion. Required for the trans-splicing of intron 1 of the mitochondrial nad1 transcript encoding the ND1 subunit of the mitochondrial membrane respiratory chain NADH dehydrogenase (Complex I). The protein is Pentatricopeptide repeat-containing protein At1g74900, mitochondrial (OTP43) of Arabidopsis thaliana (Mouse-ear cress).